Here is a 498-residue protein sequence, read N- to C-terminus: Probable cytosol aminopeptidase (498 aa).

Mn(2+) is bound by residues K264 and D269. Residue K276 is part of the active site. D287, D346, and E348 together coordinate Mn(2+). The active site involves R350.

Belongs to the peptidase M17 family. It depends on Mn(2+) as a cofactor.

Its subcellular location is the cytoplasm. The enzyme catalyses Release of an N-terminal amino acid, Xaa-|-Yaa-, in which Xaa is preferably Leu, but may be other amino acids including Pro although not Arg or Lys, and Yaa may be Pro. Amino acid amides and methyl esters are also readily hydrolyzed, but rates on arylamides are exceedingly low.. It catalyses the reaction Release of an N-terminal amino acid, preferentially leucine, but not glutamic or aspartic acids.. Presumably involved in the processing and regular turnover of intracellular proteins. Catalyzes the removal of unsubstituted N-terminal amino acids from various peptides. This Brucella anthropi (strain ATCC 49188 / DSM 6882 / CCUG 24695 / JCM 21032 / LMG 3331 / NBRC 15819 / NCTC 12168 / Alc 37) (Ochrobactrum anthropi) protein is Probable cytosol aminopeptidase.